The sequence spans 212 residues: MAGVRVKICGLRTESDVKAAASSGAAYVGLVFFPKSPRHLELAQAQRLALAAPPGVAKVALTVDASDETLDAIVEAVPLDMLQLHGGESPERVAEVRARYGLPVMKAVGVADEGDLPQILEQSLAADQILIDAKPPKGAALPGGNGLSFDWRLISGRHWIRPWMLAGGLTVENLAEAVRRTGASQVDVSSGVESAPGVKDPARIAAFLQAAR.

This sequence belongs to the TrpF family.

The enzyme catalyses N-(5-phospho-beta-D-ribosyl)anthranilate = 1-(2-carboxyphenylamino)-1-deoxy-D-ribulose 5-phosphate. It participates in amino-acid biosynthesis; L-tryptophan biosynthesis; L-tryptophan from chorismate: step 3/5. The protein is N-(5'-phosphoribosyl)anthranilate isomerase (trpF) of Cereibacter sphaeroides (strain ATCC 17023 / DSM 158 / JCM 6121 / CCUG 31486 / LMG 2827 / NBRC 12203 / NCIMB 8253 / ATH 2.4.1.) (Rhodobacter sphaeroides).